The primary structure comprises 460 residues: tRNA modification GTPase MnmE (460 aa).

3 residues coordinate (6S)-5-formyl-5,6,7,8-tetrahydrofolate: Arg29, Glu91, and Lys132. Positions 227–383 constitute a TrmE-type G domain; sequence GISIALIGKT…LIDTIIKKCG (157 aa). Residue Asn237 participates in K(+) binding. Residues 237-242, 256-262, and 281-284 contribute to the GTP site; these read NVGKSS, TNIPGTT, and DTAG. Mg(2+) is bound at residue Ser241. The K(+) site is built by Thr256, Ile258, and Thr261. Thr262 is a binding site for Mg(2+). Lys460 is a binding site for (6S)-5-formyl-5,6,7,8-tetrahydrofolate.

It belongs to the TRAFAC class TrmE-Era-EngA-EngB-Septin-like GTPase superfamily. TrmE GTPase family. In terms of assembly, homodimer. Heterotetramer of two MnmE and two MnmG subunits. It depends on K(+) as a cofactor.

Its subcellular location is the cytoplasm. In terms of biological role, exhibits a very high intrinsic GTPase hydrolysis rate. Involved in the addition of a carboxymethylaminomethyl (cmnm) group at the wobble position (U34) of certain tRNAs, forming tRNA-cmnm(5)s(2)U34. The sequence is that of tRNA modification GTPase MnmE from Prochlorococcus marinus (strain AS9601).